The following is a 244-amino-acid chain: Claudin-12 (244 aa).

Over 1 to 10 (MGCRDVHAAT) the chain is Cytoplasmic. The chain crosses the membrane as a helical span at residues 11–31 (VLSFLCGIASVAGLFAGTLLP). Residues 32–87 (NWRKLRLITFNRNEKNLTVYTGLWVKCARYDGSSDCLMYDTTWYSSVDQLDLRVLQ) lie on the Extracellular side of the membrane. The helical transmembrane segment at 88 to 108 (FALPLSMLIAMGALLLCLIGM) threads the bilayer. Residues 109-135 (CNTAFRSSVPNIKLAKCLVNSAGCHLV) lie on the Cytoplasmic side of the membrane. Residues 136–156 (AGLLFFLAGTVSLSPSIWVIF) form a helical membrane-spanning segment. Over 157-174 (YNIHLNKKFEPVFSFDYA) the chain is Extracellular. Residues 175 to 195 (VYVTIASAGGLFMTSLILFIW) form a helical membrane-spanning segment. Residues 196–244 (YCTCKSLPSPFWQPLYSHPPSMHTYSQPYSARSRLSAIEIDIPVVSHTT) are Cytoplasmic-facing. Phosphoserine is present on residues serine 228 and serine 231.

This sequence belongs to the claudin family. Interacts with OCLN.

The protein resides in the cell junction. The protein localises to the tight junction. Its subcellular location is the cell membrane. Its function is as follows. Plays a major role in tight junction-specific obliteration of the intercellular space, through calcium-independent cell-adhesion activity. The sequence is that of Claudin-12 (CLDN12) from Pongo abelii (Sumatran orangutan).